Consider the following 213-residue polypeptide: Peptidyl-tRNA hydrolase (213 aa).

A tRNA-binding site is contributed by Tyr26. The active-site Proton acceptor is the His31. Tyr78, Asn80, and Asn126 together coordinate tRNA.

This sequence belongs to the PTH family. Monomer.

It localises to the cytoplasm. It carries out the reaction an N-acyl-L-alpha-aminoacyl-tRNA + H2O = an N-acyl-L-amino acid + a tRNA + H(+). Its function is as follows. Hydrolyzes ribosome-free peptidyl-tRNAs (with 1 or more amino acids incorporated), which drop off the ribosome during protein synthesis, or as a result of ribosome stalling. In terms of biological role, catalyzes the release of premature peptidyl moieties from peptidyl-tRNA molecules trapped in stalled 50S ribosomal subunits, and thus maintains levels of free tRNAs and 50S ribosomes. This is Peptidyl-tRNA hydrolase from Trichormus variabilis (strain ATCC 29413 / PCC 7937) (Anabaena variabilis).